The following is a 286-amino-acid chain: Haloalkane dehalogenase 2 (286 aa).

Residues 35-134 (PPILLCHGNP…RVRGVVLGNT (100 aa)) enclose the AB hydrolase-1 domain. D109 serves as the catalytic Nucleophile. D238 functions as the Proton donor in the catalytic mechanism. The active-site Proton acceptor is H267.

This sequence belongs to the haloalkane dehalogenase family. Type 1 subfamily. Monomer.

The catalysed reaction is 1-haloalkane + H2O = a halide anion + a primary alcohol + H(+). Its function is as follows. Catalyzes hydrolytic cleavage of carbon-halogen bonds in halogenated aliphatic compounds, leading to the formation of the corresponding primary alcohols, halide ions and protons. In Mycobacterium bovis (strain ATCC BAA-935 / AF2122/97), this protein is Haloalkane dehalogenase 2 (dhmA2).